Consider the following 332-residue polypeptide: Ferredoxin--NADP reductase 2 (332 aa).

FAD is bound by residues Glu-37, Gln-45, Tyr-50, Val-90, Phe-124, Asp-285, and Thr-326.

Belongs to the ferredoxin--NADP reductase type 2 family. Homodimer. FAD is required as a cofactor.

It catalyses the reaction 2 reduced [2Fe-2S]-[ferredoxin] + NADP(+) + H(+) = 2 oxidized [2Fe-2S]-[ferredoxin] + NADPH. The sequence is that of Ferredoxin--NADP reductase 2 from Bacillus licheniformis (strain ATCC 14580 / DSM 13 / JCM 2505 / CCUG 7422 / NBRC 12200 / NCIMB 9375 / NCTC 10341 / NRRL NRS-1264 / Gibson 46).